The primary structure comprises 344 residues: Fructose-1,6-bisphosphatase class 1 (344 aa).

Positions 91, 110, 112, and 113 each coordinate Mg(2+). Substrate is bound by residues 113–116 and asparagine 200; that span reads DGSS. Glutamate 272 contacts Mg(2+).

This sequence belongs to the FBPase class 1 family. As to quaternary structure, homotetramer. Mg(2+) serves as cofactor.

Its subcellular location is the cytoplasm. It carries out the reaction beta-D-fructose 1,6-bisphosphate + H2O = beta-D-fructose 6-phosphate + phosphate. It participates in carbohydrate biosynthesis; Calvin cycle. The protein is Fructose-1,6-bisphosphatase class 1 of Rhodopseudomonas palustris (strain BisA53).